The sequence spans 280 residues: MTPPILRRLDDLRALRRDWMKKGDTLGLVPTMGALHAGHLSLVEAAKAACDHVVVTIFVNPKQFNSPEDLANYPRTEHEDAQKLAPYGVDAIYVPDPDQIYPEGYATTVSLTGVTDVMEGPNRPGHFEGVATVVAKLFLQSGADRAFFGEKDYQQLMVVRRMARDLDIPIEVIGCPTVREASGLAMSSRNMRLSAAATKTAGQLNPLMEAAATRLRAGEDYAPLEAEMRAQLSDLGFAEIEYIDLRCAQDLTSLDRLDRPARMFVAAWLDGVRLIDNIAV.

ATP is bound at residue methionine 32–histidine 39. Histidine 39 (proton donor) is an active-site residue. Residue glutamine 63 coordinates (R)-pantoate. Glutamine 63 contacts beta-alanine. Position 149 to 152 (glycine 149 to aspartate 152) interacts with ATP. Glutamine 155 provides a ligand contact to (R)-pantoate. Residues valine 178 and methionine 186–arginine 189 contribute to the ATP site.

This sequence belongs to the pantothenate synthetase family. In terms of assembly, homodimer.

The protein resides in the cytoplasm. It catalyses the reaction (R)-pantoate + beta-alanine + ATP = (R)-pantothenate + AMP + diphosphate + H(+). Its pathway is cofactor biosynthesis; (R)-pantothenate biosynthesis; (R)-pantothenate from (R)-pantoate and beta-alanine: step 1/1. Functionally, catalyzes the condensation of pantoate with beta-alanine in an ATP-dependent reaction via a pantoyl-adenylate intermediate. The chain is Pantothenate synthetase from Ruegeria sp. (strain TM1040) (Silicibacter sp.).